A 1748-amino-acid polypeptide reads, in one-letter code: Tight junction protein 1 (1748 aa).

Positions 23–110 constitute a PDZ 1 domain; that stretch reads TVTLHRAPGF…NAKITIRRKK (88 aa). Residues 102-112 show a composition bias toward basic residues; the sequence is AKITIRRKKKV. The tract at residues 102 to 189 is disordered; that stretch reads AKITIRRKKK…QPAKPTKVTL (88 aa). Positions 123–136 are enriched in acidic residues; it reads PVSDNEEDSYDEEI. The residue at position 125 (Ser-125) is a Phosphoserine. Tyr-132 is subject to Phosphotyrosine. Positions 149 to 175 are enriched in basic and acidic residues; sequence RRSEKIWPRDRSASRERSLSPRSDRRS. Residues Ser-175, Ser-178, and Ser-179 each carry the phosphoserine modification. Residue Thr-185 is modified to Phosphothreonine. The region spanning 186 to 264 is the PDZ 2 domain; it reads KVTLVKSRKN…KLKMVVQRDE (79 aa). Ser-212 and Ser-241 each carry phosphoserine. Thr-267 bears the Phosphothreonine mark. Ser-275, Ser-277, Ser-280, Ser-284, Ser-290, Ser-294, Ser-297, Ser-300, Ser-323, Ser-329, Ser-334, Ser-337, and Ser-353 each carry phosphoserine. The interval 295–396 is disordered; that stretch reads LASDHSGRSH…PVYAQVGQPD (102 aa). Positions 299–327 are enriched in basic and acidic residues; sequence HSGRSHDRPPRRSRSRSPDQRSEPSDHSR. The segment covering 329-338 has biased composition (polar residues); that stretch reads SPQQPSNGSL. At Thr-354 the chain carries Phosphothreonine. The span at 357–377 shows a compositional bias: basic and acidic residues; the sequence is KHADDHTPKTVEEVTVERNEK. The region spanning 421 to 502 is the PDZ 3 domain; that stretch reads SMKLVKFRKG…GEEVTILAQK (82 aa). An SH3 domain is found at 516–584; that stretch reads GDSFYIRTHF…PNKNRAEQLA (69 aa). One can recognise a Guanylate kinase-like domain in the interval 598–779; it reads RADFWRFRGL…TTTINLNSMN (182 aa). A phosphoserine mark is found at Ser-617 and Ser-622. The segment at 633–876 is occludin (OCLN)-binding region; the sequence is YERVVLREAG…GTPPESAITR (244 aa). Thr-809 is subject to Phosphothreonine. A phosphoserine mark is found at Ser-810 and Ser-821. Tyr-822 is modified (phosphotyrosine). A phosphoserine mark is found at Ser-824, Ser-828, and Ser-837. 2 disordered regions span residues 825–1081 and 1095–1587; these read APGS…LRYE and DDKQ…PEFD. Phosphothreonine occurs at positions 846, 848, 854, 861, and 868. A compositionally biased stretch (basic and acidic residues) spans 879-892; sequence EPVREDSSGMHHEN. Residues 893-906 are compositionally biased toward low complexity; the sequence is QTYPPYSPQAQPQP. A Phosphoserine modification is found at Ser-912. 2 stretches are compositionally biased toward polar residues: residues 934–953 and 963–979; these read PETN…NLTN and PSTS…TPST. At Ser-968 the chain carries Phosphoserine. Over residues 998 to 1014 the composition is skewed to basic and acidic residues; it reads DPTKVYRKDPYPEEMMR. The span at 1061 to 1072 shows a compositional bias: polar residues; it reads YESSSYTDQFSR. Ser-1071, Ser-1111, and Ser-1139 each carry phosphoserine. A compositionally biased stretch (basic and acidic residues) spans 1110–1125; sequence HSQDLDSRQHPEESSE. Phosphotyrosine is present on residues Tyr-1140 and Tyr-1165. The interval 1151–1371 is actin-binding region (ABR); the sequence is RASALRHEEQ…FDRRSFENKP (221 aa). Basic and acidic residues-rich tracts occupy residues 1269 to 1286 and 1336 to 1347; these read KMFE…KDVN and PPEDIVRSNHYD. Tyr-1354 is subject to Phosphotyrosine. Phosphoserine is present on Ser-1366. Residues 1389 to 1400 are compositionally biased toward low complexity; that stretch reads SQNQSNFSSYSS. The segment covering 1403–1420 has biased composition (basic and acidic residues); sequence KPPEADGVDRSFGEKRYE. The residue at position 1413 (Ser-1413) is a Phosphoserine. Polar residues-rich tracts occupy residues 1459–1470 and 1512–1522; these read NSVSLDFQNSLV and GTEQTQKTVTP. Basic and acidic residues predominate over residues 1538-1547; it reads PFERKFESPK. Phosphoserine occurs at positions 1545 and 1617. The 115-residue stretch at 1634–1748 folds into the ZU5 domain; the sequence is ATARGIFNSN…NCVSVLIDHF (115 aa).

The protein belongs to the MAGUK family. As to quaternary structure, homodimer. Forms heterodimers TJP3. Forms a heterodimer (via PDZ2 domain) with TJP2/ZO2 (via PDZ2 domain). Interacts with OCLN, CALM, claudins, CGN/cingulin, CXADR, GJA12, GJD3 and UBN1. Interacts (via ZU5 domain) with CDC42BPB and MYZAP. Interacts (via PDZ domain) with GJA1. Interacts (via PDZ domains) with ANKRD2. Interacts with POPDC1 (via the C-terminus cytoplasmic tail). Interacts with HSPA4 and KIRREL1. Interacts with DLL1. Interacts with USP53 (via the C-terminal region). Interacts (via ABR region) with F-actin. Interacts with DNMBP (via C-terminal domain); required for the apical cell-cell junction localization of DNMBP. Interacts with SPEF1. Interacts (via N-terminus) with CTNNA1. Interacts with CLDN18. Interacts with CLDN16 (via TRV motif); this is a prerequisite for anchoring of CLDN16 at the tight junction. Interacts with PKP1; the interaction facilitates TJP1/ZO-1 localization to the plasma membrane. Interacts with PATJ (via PDZ1-6 domains); the interaction is required for attachment and extension of TJP1/ZO1 condensates along the apical cell interface. Phosphorylated at tyrosine redidues in response to epidermal growth factor (EGF). This response is dependent on an intact actin microfilament system. Dephosphorylated by PTPRJ. The alpha-containing isoform is found in most epithelial cell junctions. The short isoform is found both in endothelial cells and the highly specialized epithelial junctions of renal glomeruli and Sertoli cells of the seminiferous tubules.

It localises to the cell membrane. Its subcellular location is the cell junction. It is found in the tight junction. The protein resides in the gap junction. The protein localises to the cell projection. It localises to the podosome. Functionally, TJP1, TJP2, and TJP3 are closely related scaffolding proteins that link tight junction (TJ) transmembrane proteins such as claudins, junctional adhesion molecules, and occludin to the actin cytoskeleton. Forms a multistranded TJP1/ZO1 condensate which elongates to form a tight junction belt, the belt is anchored at the apical cell membrane via interaction with PATJ. The tight junction acts to limit movement of substances through the paracellular space and as a boundary between the compositionally distinct apical and basolateral plasma membrane domains of epithelial and endothelial cells. Necessary for lumenogenesis, and particularly efficient epithelial polarization and barrier formation. Plays a role in the regulation of cell migration by targeting CDC42BPB to the leading edge of migrating cells. Plays an important role in podosome formation and associated function, thus regulating cell adhesion and matrix remodeling. With TJP2 and TJP3, participates in the junctional retention and stability of the transcription factor DBPA, but is not involved in its shuttling to the nucleus. May play a role in mediating cell morphology changes during ameloblast differentiation via its role in tight junctions. The sequence is that of Tight junction protein 1 from Homo sapiens (Human).